We begin with the raw amino-acid sequence, 390 residues long: Trehalose-phosphate phosphatase (390 aa).

Catalysis depends on aspartate 150, which acts as the Nucleophile. Residues aspartate 150, aspartate 152, and aspartate 333 each coordinate Mg(2+). Position 150–152 (150–152 (DFD)) interacts with substrate.

The protein belongs to the trehalose phosphatase family. Mg(2+) is required as a cofactor.

The catalysed reaction is alpha,alpha-trehalose 6-phosphate + H2O = alpha,alpha-trehalose + phosphate. Its pathway is glycan biosynthesis; trehalose biosynthesis. Functionally, removes the phosphate from trehalose 6-phosphate to produce free trehalose. This chain is Trehalose-phosphate phosphatase (otsB), found in Mycobacterium ulcerans (strain Agy99).